Reading from the N-terminus, the 79-residue chain is D-alanyl carrier protein (79 aa).

The Carrier domain maps to 1-77; that stretch reads MDIKSEVLAI…KIVAGVTELC (77 aa). Serine 35 bears the O-(pantetheine 4'-phosphoryl)serine mark.

The protein belongs to the DltC family. Post-translationally, 4'-phosphopantetheine is transferred from CoA to a specific serine of apo-DCP.

It localises to the cytoplasm. It functions in the pathway cell wall biogenesis; lipoteichoic acid biosynthesis. Its function is as follows. Carrier protein involved in the D-alanylation of lipoteichoic acid (LTA). The loading of thioester-linked D-alanine onto DltC is catalyzed by D-alanine--D-alanyl carrier protein ligase DltA. The DltC-carried D-alanyl group is further transferred to cell membrane phosphatidylglycerol (PG) by forming an ester bond, probably catalyzed by DltD. D-alanylation of LTA plays an important role in modulating the properties of the cell wall in Gram-positive bacteria, influencing the net charge of the cell wall. In Streptococcus agalactiae serotype Ia (strain ATCC 27591 / A909 / CDC SS700), this protein is D-alanyl carrier protein.